The primary structure comprises 349 residues: Isopentenyl-diphosphate delta-isomerase (349 aa).

9–10 provides a ligand contact to substrate; that stretch reads RK. Residues 65 to 67, S95, and N124 each bind FMN; that span reads AMT. 95–97 serves as a coordination point for substrate; it reads STH. Position 154 (Q154) interacts with substrate. E155 is a binding site for Mg(2+). Residues K186, S211, T216, 262-264, and 283-284 contribute to the FMN site; these read GLR and SR.

This sequence belongs to the IPP isomerase type 2 family. Homooctamer. Dimer of tetramers. It depends on FMN as a cofactor. Requires NADPH as cofactor. The cofactor is Mg(2+).

Its subcellular location is the cytoplasm. It catalyses the reaction isopentenyl diphosphate = dimethylallyl diphosphate. In terms of biological role, involved in the biosynthesis of isoprenoids. Catalyzes the 1,3-allylic rearrangement of the homoallylic substrate isopentenyl (IPP) to its allylic isomer, dimethylallyl diphosphate (DMAPP). This chain is Isopentenyl-diphosphate delta-isomerase, found in Staphylococcus aureus (strain N315).